The following is a 424-amino-acid chain: Synaptotagmin-1 (424 aa).

The Vesicular segment spans residues 1–60 (MVSESHHEALAAPPATTVAAALPSNVTEPAAPGGGGGKEDAFSNLKKKFMNELNKIPLPP). Asn-25 carries an N-linked (GlcNAc...) asparagine glycan. The helical transmembrane segment at 61–82 (WALIAIAIVAVLLILTCCFCLC) threads the bilayer. Residues Cys-77, Cys-78, Cys-80, Cys-82, and Cys-85 are each lipidated (S-palmitoyl cysteine). Topologically, residues 83 to 424 (KKCLFKKKNK…EVDAMLAVKK (342 aa)) are cytoplasmic. Residues 117 to 142 (KDQALKDDDAETGLTDGEEKEEPKEV) form a disordered region. Residues 124–136 (DDAETGLTDGEEK) are compositionally biased toward acidic residues. The interval 138 to 384 (EPKEVEKLGK…AIGKVFVGYN (247 aa)) is phospholipid binding. 2 consecutive C2 domains span residues 144-263 (KLGK…EEWR) and 275-408 (KLGD…AQWH). Positions 174, 175, 181, 233, 234, 235, 238, 239, 241, 306, 312, 366, 368, and 374 each coordinate Ca(2+).

Belongs to the synaptotagmin family. In terms of assembly, homotetramer. Ca(2+) serves as cofactor.

The protein resides in the cytoplasmic vesicle. It is found in the secretory vesicle membrane. Its subcellular location is the secretory vesicle. It localises to the synaptic vesicle membrane. The protein localises to the chromaffin granule membrane. The protein resides in the cytoplasm. Functionally, calcium sensor that participates in triggering neurotransmitter release at the synapse. May have a regulatory role in the membrane interactions during trafficking of synaptic vesicles at the active zone of the synapse. It binds acidic phospholipids with a specificity that requires the presence of both an acidic head group and a diacyl backbone. May play a role in dendrite formation by melanocytes. The chain is Synaptotagmin-1 (SYT1) from Gallus gallus (Chicken).